Reading from the N-terminus, the 212-residue chain is Glutathione S-transferase P 1 (212 aa).

Positions 2-83 (PGYVLTYFPV…YLGNKHGLTG (82 aa)) constitute a GST N-terminal domain. Glutathione is bound by residues tyrosine 8, arginine 14, tryptophan 39, lysine 47, 54-55 (QL), and 67-68 (QS). In terms of domain architecture, GST C-terminal spans 85–206 (NDEERGHIDM…KSDARNKRPI (122 aa)).

Belongs to the GST superfamily. Pi family. Homodimer. In terms of tissue distribution, expressed only in embryos. Not expressed in liver, lung, heart, kidney and ovary.

The protein resides in the cytoplasm. It localises to the mitochondrion. It is found in the nucleus. It catalyses the reaction RX + glutathione = an S-substituted glutathione + a halide anion + H(+). Its function is as follows. Conjugation of reduced glutathione to a wide number of exogenous and endogenous hydrophobic electrophiles. Highly active towards 1-chloro-2,4-dinitrobenzene and organic isothiocyanates, but shows no detectable activity towards 1,2-dichloro-4-nitrobenzene, p-nitrobenzylchloride, trans-4-phenyl-3-buten-2-one (tPBO) and ethacrynic acid. May be associated with cellular proliferation. This chain is Glutathione S-transferase P 1 (gstp1), found in Xenopus laevis (African clawed frog).